A 307-amino-acid chain; its full sequence is UDP-3-O-acyl-N-acetylglucosamine deacetylase (307 aa).

Positions 78, 241, and 245 each coordinate Zn(2+). Catalysis depends on histidine 268, which acts as the Proton donor.

Belongs to the LpxC family. Requires Zn(2+) as cofactor.

The enzyme catalyses a UDP-3-O-[(3R)-3-hydroxyacyl]-N-acetyl-alpha-D-glucosamine + H2O = a UDP-3-O-[(3R)-3-hydroxyacyl]-alpha-D-glucosamine + acetate. The protein operates within glycolipid biosynthesis; lipid IV(A) biosynthesis; lipid IV(A) from (3R)-3-hydroxytetradecanoyl-[acyl-carrier-protein] and UDP-N-acetyl-alpha-D-glucosamine: step 2/6. In terms of biological role, catalyzes the hydrolysis of UDP-3-O-myristoyl-N-acetylglucosamine to form UDP-3-O-myristoylglucosamine and acetate, the committed step in lipid A biosynthesis. The protein is UDP-3-O-acyl-N-acetylglucosamine deacetylase of Polaromonas naphthalenivorans (strain CJ2).